We begin with the raw amino-acid sequence, 283 residues long: NAD kinase (283 aa).

Asp-68 acts as the Proton acceptor in catalysis. Residues 68–69, Arg-73, 142–143, Arg-153, Arg-170, Asp-172, and 183–188 each bind NAD(+); these read DG, ND, and TAYSLS.

Belongs to the NAD kinase family. A divalent metal cation is required as a cofactor.

It localises to the cytoplasm. It carries out the reaction NAD(+) + ATP = ADP + NADP(+) + H(+). Involved in the regulation of the intracellular balance of NAD and NADP, and is a key enzyme in the biosynthesis of NADP. Catalyzes specifically the phosphorylation on 2'-hydroxyl of the adenosine moiety of NAD to yield NADP. This is NAD kinase from Symbiobacterium thermophilum (strain DSM 24528 / JCM 14929 / IAM 14863 / T).